A 910-amino-acid polypeptide reads, in one-letter code: DNA mismatch repair protein MutS (910 aa).

Residues 1–11 are compositionally biased toward basic and acidic residues; sequence MEAKVEEKEPE. A disordered region spans residues 1–21; it reads MEAKVEEKEPEPVENAGPDAP. 658 to 665 lines the ATP pocket; that stretch reads GPNMGGKS.

The protein belongs to the DNA mismatch repair MutS family.

This protein is involved in the repair of mismatches in DNA. It is possible that it carries out the mismatch recognition step. This protein has a weak ATPase activity. The polypeptide is DNA mismatch repair protein MutS (Brucella melitensis biotype 1 (strain ATCC 23456 / CCUG 17765 / NCTC 10094 / 16M)).